The following is a 148-amino-acid chain: Large ribosomal subunit protein uL15 (148 aa).

Positions Met1–Val47 are disordered.

The protein belongs to the universal ribosomal protein uL15 family. In terms of assembly, part of the 50S ribosomal subunit.

Functionally, binds to the 23S rRNA. In Kosmotoga olearia (strain ATCC BAA-1733 / DSM 21960 / TBF 19.5.1), this protein is Large ribosomal subunit protein uL15.